A 63-amino-acid polypeptide reads, in one-letter code: DNA-directed RNA polymerase 7 kDa subunit (63 aa).

This sequence belongs to the poxviridae DNA-directed RNA polymerase 7 kDa subunit family. In terms of assembly, the DNA-dependent RNA polymerase (vRNAP) consists of eight subunits encoded by early viral genes and termed according to their apparent molecular masses Rpo147, Rpo132, Rpo35, Rpo30, Rpo22, Rpo19, Rpo18, and Rpo7. The same holoenzyme, with the addition of the transcription-specificity factor RAP94, is used for early gene expression.

It is found in the virion. The catalysed reaction is RNA(n) + a ribonucleoside 5'-triphosphate = RNA(n+1) + diphosphate. Part of the DNA-dependent RNA polymerase which catalyzes the transcription of viral DNA into RNA using the four ribonucleoside triphosphates as substrates. Responsible for the transcription of early, intermediate and late genes. DNA-dependent RNA polymerase associates with the early transcription factor (ETF), itself composed of OPG118 and OPG134, thereby allowing the early genes transcription. Late transcription, and probably also intermediate transcription, require newly synthesized RNA polymerase. The sequence is that of DNA-directed RNA polymerase 7 kDa subunit (OPG090) from Homo sapiens (Human).